We begin with the raw amino-acid sequence, 500 residues long: Lysine--tRNA ligase (500 aa).

Positions 410 and 417 each coordinate Mg(2+).

This sequence belongs to the class-II aminoacyl-tRNA synthetase family. Homodimer. Mg(2+) serves as cofactor.

It is found in the cytoplasm. It carries out the reaction tRNA(Lys) + L-lysine + ATP = L-lysyl-tRNA(Lys) + AMP + diphosphate. The chain is Lysine--tRNA ligase from Pseudomonas putida (strain ATCC 47054 / DSM 6125 / CFBP 8728 / NCIMB 11950 / KT2440).